The primary structure comprises 180 residues: Large ribosomal subunit protein uL6 (180 aa).

Belongs to the universal ribosomal protein uL6 family. Part of the 50S ribosomal subunit.

In terms of biological role, this protein binds to the 23S rRNA, and is important in its secondary structure. It is located near the subunit interface in the base of the L7/L12 stalk, and near the tRNA binding site of the peptidyltransferase center. This is Large ribosomal subunit protein uL6 from Clostridium botulinum (strain Loch Maree / Type A3).